The chain runs to 424 residues: MLDIKFLRTNFEEVKAKLQHRGEDLTDFGRFEELDTRRRELLVQTEELKSKRNEVSQQISVLKREKKDAEALILEMREVGEKVKDLDNELRTVEEDLERLMLSIPNIPHESAPVGETEDDNVVARTWGEVKEFAFEPKPHWDLATDLGILDFERAGKVTGSRFVFYKGAGARLERALISFMLDLHTDEHGYEEVLPPYMVNRASMTGTGQLPKFEEDAFRIESEDYFLIPTAEVPVTNMHRDEILNKDQLPIRYAAFSSCFRSEAGSAGRDTRGLIRQHQFNKVELVKFVKPEDSYEELEKLTNDAERVLQLLELPYRVMSMCTGDLGFTAAKKYDIEVWIPSYGTYREISSCSNFEAFQARRANIRFRREPNGKPEHVHTLNGSGLAIGRTVAAILENYQQEDGTIIIPEVLRPYMGGKTVIK.

231 to 233 contacts L-serine; it reads TAE. 262-264 is a binding site for ATP; sequence RSE. Glu285 serves as a coordination point for L-serine. 349–352 serves as a coordination point for ATP; it reads EISS. Ser385 contributes to the L-serine binding site.

Belongs to the class-II aminoacyl-tRNA synthetase family. Type-1 seryl-tRNA synthetase subfamily. As to quaternary structure, homodimer. The tRNA molecule binds across the dimer.

The protein localises to the cytoplasm. It catalyses the reaction tRNA(Ser) + L-serine + ATP = L-seryl-tRNA(Ser) + AMP + diphosphate + H(+). The catalysed reaction is tRNA(Sec) + L-serine + ATP = L-seryl-tRNA(Sec) + AMP + diphosphate + H(+). It functions in the pathway aminoacyl-tRNA biosynthesis; selenocysteinyl-tRNA(Sec) biosynthesis; L-seryl-tRNA(Sec) from L-serine and tRNA(Sec): step 1/1. Functionally, catalyzes the attachment of serine to tRNA(Ser). Is also able to aminoacylate tRNA(Sec) with serine, to form the misacylated tRNA L-seryl-tRNA(Sec), which will be further converted into selenocysteinyl-tRNA(Sec). This chain is Serine--tRNA ligase, found in Bacillus cereus (strain AH187).